Consider the following 463-residue polypeptide: Glycine--tRNA ligase (463 aa).

R100 and E175 together coordinate substrate. Residues 207-209 (RNE), 217-222 (FRTREF), 291-292 (EL), and 335-338 (GADR) contribute to the ATP site. 222 to 226 (FEQME) provides a ligand contact to substrate. Residue 331–335 (EPSVG) participates in substrate binding.

Belongs to the class-II aminoacyl-tRNA synthetase family. As to quaternary structure, homodimer.

The protein localises to the cytoplasm. It catalyses the reaction tRNA(Gly) + glycine + ATP = glycyl-tRNA(Gly) + AMP + diphosphate. Functionally, catalyzes the attachment of glycine to tRNA(Gly). The polypeptide is Glycine--tRNA ligase (Clostridium kluyveri (strain NBRC 12016)).